A 431-amino-acid chain; its full sequence is Reverse prenyltransferase criA (431 aa).

Dimethylallyl diphosphate is bound by residues Arg104, Lys193, Tyr195, Lys262, Tyr264, Tyr347, Tyr412, and Tyr416.

The protein belongs to the tryptophan dimethylallyltransferase family. As to quaternary structure, monomer.

It carries out the reaction cyclo(L-tryptophyl-L-alanyl) + dimethylallyl diphosphate = preechinulin + diphosphate. It functions in the pathway secondary metabolite biosynthesis. Its pathway is alkaloid biosynthesis. Reverse prenyltransferase; part of the gene cluster that mediates the biosynthesis of echinulin family alkaloid. The pathway begins with the biosynthesis of the cyclic dipeptide cyclo-L-Trp-L-Ala (cyclo-TA) by the NRPS criC via condensation of L-alanine and L-tryptophan. The prenyltransferase criA then catalyzes the first prenylation step, a reverse prenylation reaction at C2, to yield preechinulin. Preechinulin is the substrate of the cytochrome P450 monooxygenase criE that catalyzes the formation of the double bond between C10 and C11 to produce neoechulin A. The unique prenyltransferase criF functions as a competitive enzyme with criE for preechinulin metabolization and uses preechinulin for effective regiospecific prenylations. Preechinulin is prenylated by criF at C5 or C7. C7-prenylation leads to accumulation of tardioxopiperazine B without further modification by criF. In contrast, the C5-prenylated tardioxopiperazine A can be prenylated again by criF, predominantly at C7 to form echinulin or less frequently at C4 to give variecolorin L. CriF also accepts neoechilunin A to produce varlecolorin G (prenylation at C5) or isoechinulin A (prenylation at C7). CriF further converts isoechinulin A into dehydroechinulin. Moreover, a yet unidentified enzyme can also convert neoechilunin A into neoechilunin B by introducing a double bond between positions C14 and C17 and thus provides a further substrate to criF for C5 and C7 prenylation. This Aspergillus cristatus (Chinese Fuzhuan brick tea-fermentation fungus) protein is Reverse prenyltransferase criA.